Consider the following 291-residue polypeptide: uncharacterized protein (291 aa).

10 consecutive transmembrane segments (helical) span residues 1–21 (MHNLIFAILCSVAVSVLLKIA), 26–46 (IIIEQAIAFNYITAITFSYFL), 67–87 (PIFLALGLLLPSVFIIMSKAV), 95–115 (SDAAQRLSLFLPILAAFLIFH), 117–137 (TLSQSKIIGVVLAFIGLFCLL), 149–169 (FKGVLGLIGVWFGYGIIDILF), 179–199 (FPATLFISFSLAACVMFIYLF), 208–228 (SSVIGGIVLGVLNFFNILFYI), 241–261 (VFAGMNIGVICLGTITGALVF), and 270–290 (WLGIIFSLSAIFCLYYLDKII). Residues 107–138 (ILAAFLIFHETLSQSKIIGVVLAFIGLFCLLT) enclose the EamA domain.

It is found in the cell membrane. This is an uncharacterized protein from Haemophilus influenzae (strain ATCC 51907 / DSM 11121 / KW20 / Rd).